The sequence spans 377 residues: S-adenosylmethionine synthase (377 aa).

Histidine 14 lines the ATP pocket. A Mg(2+)-binding site is contributed by aspartate 16. Glutamate 42 lines the K(+) pocket. Glutamine 98 is a binding site for L-methionine. The flexible loop stretch occupies residues 98–108 (QSADIALGIDL). ATP contacts are provided by residues 162–164 (DMK), 228–229 (RF), aspartate 237, 243–244 (RK), alanine 260, and lysine 264. Aspartate 237 lines the L-methionine pocket. Lysine 268 contacts L-methionine.

Belongs to the AdoMet synthase family. In terms of assembly, homotetramer; dimer of dimers. Mg(2+) is required as a cofactor. The cofactor is K(+).

The protein resides in the cytoplasm. It carries out the reaction L-methionine + ATP + H2O = S-adenosyl-L-methionine + phosphate + diphosphate. Its pathway is amino-acid biosynthesis; S-adenosyl-L-methionine biosynthesis; S-adenosyl-L-methionine from L-methionine: step 1/1. Functionally, catalyzes the formation of S-adenosylmethionine (AdoMet) from methionine and ATP. The overall synthetic reaction is composed of two sequential steps, AdoMet formation and the subsequent tripolyphosphate hydrolysis which occurs prior to release of AdoMet from the enzyme. This chain is S-adenosylmethionine synthase, found in Mesoplasma florum (strain ATCC 33453 / NBRC 100688 / NCTC 11704 / L1) (Acholeplasma florum).